The following is a 238-amino-acid chain: Uridylate kinase (238 aa).

12–15 contributes to the ATP binding site; the sequence is KLSG. Position 54 (glycine 54) interacts with UMP. Residues glycine 55 and arginine 59 each coordinate ATP. UMP is bound by residues aspartate 74 and 135–142; that span reads TGNPFFTT. ATP-binding residues include threonine 162, tyrosine 168, and aspartate 171.

The protein belongs to the UMP kinase family. Homohexamer.

It is found in the cytoplasm. The enzyme catalyses UMP + ATP = UDP + ADP. It functions in the pathway pyrimidine metabolism; CTP biosynthesis via de novo pathway; UDP from UMP (UMPK route): step 1/1. Inhibited by UTP. Its function is as follows. Catalyzes the reversible phosphorylation of UMP to UDP. This chain is Uridylate kinase, found in Bordetella pertussis (strain Tohama I / ATCC BAA-589 / NCTC 13251).